The primary structure comprises 341 residues: 4-amino-5-hydroxymethyl-2-methylpyrimidine phosphate synthase (341 aa).

Residue lysine 62 is modified to N6-(pyridoxal phosphate)lysine. The active site involves histidine 66. 115 to 118 (GEFG) is a pyridoxal 5'-phosphate binding site. A CCCFC; essential for catalytic activity, may be the site of iron coordination motif is present at residues 195 to 199 (CCCFC).

Belongs to the NMT1/THI5 family. As to quaternary structure, homodimer. The cofactor is Fe cation.

It carries out the reaction N(6)-(pyridoxal phosphate)-L-lysyl-[4-amino-5-hydroxymethyl-2-methylpyrimidine phosphate synthase] + L-histidyl-[4-amino-5-hydroxymethyl-2-methylpyrimidine phosphate synthase] + 2 Fe(3+) + 4 H2O = L-lysyl-[4-amino-5-hydroxymethyl-2-methylpyrimidine phosphate synthase] + (2S)-2-amino-5-hydroxy-4-oxopentanoyl-[4-amino-5-hydroxymethyl-2-methylpyrimidine phosphate synthase] + 4-amino-2-methyl-5-(phosphooxymethyl)pyrimidine + 3-oxopropanoate + 2 Fe(2+) + 2 H(+). Its pathway is cofactor biosynthesis; thiamine diphosphate biosynthesis. Functionally, responsible for the formation of the pyrimidine heterocycle in the thiamine biosynthesis pathway. Catalyzes the formation of hydroxymethylpyrimidine phosphate (HMP-P) from histidine and pyridoxal phosphate (PLP). The protein uses PLP and the active site histidine to form HMP-P, generating an inactive enzyme. The enzyme can only undergo a single turnover, which suggests it is a suicide enzyme. This is 4-amino-5-hydroxymethyl-2-methylpyrimidine phosphate synthase from Uromyces fabae (Rust fungus).